Reading from the N-terminus, the 108-residue chain is UPF0166 protein MJ1524 (108 aa).

The protein belongs to the UPF0166 family.

This chain is UPF0166 protein MJ1524, found in Methanocaldococcus jannaschii (strain ATCC 43067 / DSM 2661 / JAL-1 / JCM 10045 / NBRC 100440) (Methanococcus jannaschii).